A 155-amino-acid polypeptide reads, in one-letter code: Cardio acceleratory peptide 2b (155 aa).

The first 26 residues, 1 to 26, serve as a signal peptide directing secretion; sequence MKAIFSLYNIVSAILLLVLLAEFSTA. A propeptide spanning residues 27–33 is cleaved from the precursor; sequence ELNHDKN. A Valine amide modification is found at valine 47. A propeptide spanning residues 50 to 85 is cleaved from the precursor; it reads SDPSLANSLRDASDAAVFDGLYGDASQEDYNEADYQ. Valine 96 carries the valine amide modification. Residues 99-117 constitute a propeptide that is removed on maturation; that stretch reads SDAELRKFAHLLALQQVLD. Leucine 134 carries the leucine amide modification. A propeptide spanning residues 138–155 is cleaved from the precursor; that stretch reads SVDAKAFSDASKGQQEFN.

This sequence belongs to the pyrokinin family.

Its subcellular location is the secreted. In terms of biological role, CAP-1 and CAP-2, but not CAP-3 are ligands for the Capa receptor. CAP-1 and CAP-2 are probably components of the signal transduction pathway that leads to Malpighian tubule fluid secretion via the second messenger nitric oxide. The chain is Cardio acceleratory peptide 2b from Drosophila pseudoobscura pseudoobscura (Fruit fly).